The sequence spans 318 residues: uncharacterized protein (318 aa).

Residues 67 to 157 (LAFDELEKEK…SLKAIQTSQE (91 aa)) are a coiled coil. Positions 172–318 (ESTNKVEKNA…KGFFARLFNL (147 aa)) are disordered. Composition is skewed to basic and acidic residues over residues 175–193 (NKVEKNAVTEDKADSKDSK) and 219–236 (KVDKEDQISATEAIEKAS). Residues 237-248 (VEQSKNGNAAET) show a composition bias toward polar residues. 2 stretches are compositionally biased toward basic and acidic residues: residues 249 to 274 (SNKEATIDAEAQHDAEQQVAEAHAEA) and 300 to 310 (SEPKPQEEKKG).

This is an uncharacterized protein from Staphylococcus aureus (strain MW2).